The primary structure comprises 198 residues: FMN-dependent NADH:quinone oxidoreductase 2 (198 aa).

Ser-136 to Gly-139 contributes to the FMN binding site.

This sequence belongs to the azoreductase type 1 family. As to quaternary structure, homodimer. FMN is required as a cofactor.

The enzyme catalyses 2 a quinone + NADH + H(+) = 2 a 1,4-benzosemiquinone + NAD(+). It catalyses the reaction N,N-dimethyl-1,4-phenylenediamine + anthranilate + 2 NAD(+) = 2-(4-dimethylaminophenyl)diazenylbenzoate + 2 NADH + 2 H(+). Functionally, quinone reductase that provides resistance to thiol-specific stress caused by electrophilic quinones. Its function is as follows. Also exhibits azoreductase activity. Catalyzes the reductive cleavage of the azo bond in aromatic azo compounds to the corresponding amines. In Clostridium perfringens (strain 13 / Type A), this protein is FMN-dependent NADH:quinone oxidoreductase 2.